Reading from the N-terminus, the 582-residue chain is 15-cis-phytoene desaturase, chloroplastic/chromoplastic (582 aa).

Residues 1-93 (MNLLGSISTG…ELENTINFLE (93 aa)) constitute a chloroplast and chromoplast transit peptide. Residues Ala121, 140-141 (EA), Lys148, 165-166 (HI), and Tyr171 contribute to the FAD site. Residue Arg306 coordinates substrate. Asp537 serves as a coordination point for FAD. A substrate-binding site is contributed by Ala545. Residue Met547 participates in FAD binding.

It belongs to the carotenoid/retinoid oxidoreductase family. Homotetramer. FAD serves as cofactor. As to expression, expressed in flower buds and lips. Lower expression in leaves and roots.

Its subcellular location is the plastid. It localises to the chloroplast. It is found in the chromoplast. The protein resides in the membrane. It carries out the reaction 2 a plastoquinone + 15-cis-phytoene = 9,9',15-tri-cis-zeta-carotene + 2 a plastoquinol. It functions in the pathway carotenoid biosynthesis; lycopene biosynthesis. Its function is as follows. Converts phytoene into zeta-carotene via the intermediary of phytofluene by the symmetrical introduction of two double bonds at the C-11 and C-11' positions of phytoene with a concomitant isomerization of two neighboring double bonds at the C9 and C9' positions from trans to cis. The polypeptide is 15-cis-phytoene desaturase, chloroplastic/chromoplastic (PDS) (Oncidium hybrid cultivar (Orchid)).